A 100-amino-acid polypeptide reads, in one-letter code: Urease subunit gamma (100 aa).

The protein belongs to the urease gamma subunit family. As to quaternary structure, heterotrimer of UreA (gamma), UreB (beta) and UreC (alpha) subunits. Three heterotrimers associate to form the active enzyme.

The protein localises to the cytoplasm. The enzyme catalyses urea + 2 H2O + H(+) = hydrogencarbonate + 2 NH4(+). Its pathway is nitrogen metabolism; urea degradation; CO(2) and NH(3) from urea (urease route): step 1/1. The protein is Urease subunit gamma of Paraburkholderia xenovorans (strain LB400).